A 426-amino-acid polypeptide reads, in one-letter code: Glutamate-1-semialdehyde 2,1-aminomutase (426 aa).

Lys265 is subject to N6-(pyridoxal phosphate)lysine.

The protein belongs to the class-III pyridoxal-phosphate-dependent aminotransferase family. HemL subfamily. As to quaternary structure, homodimer. The cofactor is pyridoxal 5'-phosphate.

It localises to the cytoplasm. It catalyses the reaction (S)-4-amino-5-oxopentanoate = 5-aminolevulinate. It functions in the pathway porphyrin-containing compound metabolism; protoporphyrin-IX biosynthesis; 5-aminolevulinate from L-glutamyl-tRNA(Glu): step 2/2. The sequence is that of Glutamate-1-semialdehyde 2,1-aminomutase from Hahella chejuensis (strain KCTC 2396).